The sequence spans 236 residues: 2-C-methyl-D-erythritol 4-phosphate cytidylyltransferase (236 aa).

This sequence belongs to the IspD/TarI cytidylyltransferase family. IspD subfamily. As to quaternary structure, homodimer.

It catalyses the reaction 2-C-methyl-D-erythritol 4-phosphate + CTP + H(+) = 4-CDP-2-C-methyl-D-erythritol + diphosphate. It participates in isoprenoid biosynthesis; isopentenyl diphosphate biosynthesis via DXP pathway; isopentenyl diphosphate from 1-deoxy-D-xylulose 5-phosphate: step 2/6. Its function is as follows. Catalyzes the formation of 4-diphosphocytidyl-2-C-methyl-D-erythritol from CTP and 2-C-methyl-D-erythritol 4-phosphate (MEP). This is 2-C-methyl-D-erythritol 4-phosphate cytidylyltransferase from Escherichia coli O7:K1 (strain IAI39 / ExPEC).